The following is a 106-amino-acid chain: Biogenesis of lysosome-related organelles complex 1 subunit 4 (106 aa).

Residues 53 to 106 (THSEGLSEQLKMTEKNILEMENLFDQIDQLCLFVQKAKSDLDKLEKLYNVVDRQ) adopt a coiled-coil conformation.

This sequence belongs to the BLOC1S4 family. In terms of assembly, component of the biogenesis of lysosome-related organelles complex-1 (BLOC-1) composed at least of blos-1, blos-2, blos-4, dsbn-1, glo-2, mutd-1 and snpn-1. Interacts with glo-2.

Component of the biogenesis of lysosome-related organelles complex-1 (BLOC-1) involved in gut granule biogenesis. The sequence is that of Biogenesis of lysosome-related organelles complex 1 subunit 4 (blos-4) from Caenorhabditis elegans.